We begin with the raw amino-acid sequence, 198 residues long: Probable GTP-binding protein EngB (198 aa).

Residues Asn-21–Gly-195 form the EngB-type G domain. Residues Gly-29–Ser-36, Gly-56–Leu-60, Asp-81–Gly-84, Thr-151–Asp-154, and Val-174–Asn-176 contribute to the GTP site. 2 residues coordinate Mg(2+): Ser-36 and Thr-58.

It belongs to the TRAFAC class TrmE-Era-EngA-EngB-Septin-like GTPase superfamily. EngB GTPase family. Requires Mg(2+) as cofactor.

Its function is as follows. Necessary for normal cell division and for the maintenance of normal septation. In Campylobacter jejuni (strain RM1221), this protein is Probable GTP-binding protein EngB.